Consider the following 96-residue polypeptide: RNA-binding protein Hfq (96 aa).

In terms of domain architecture, Sm spans 9–68 (DPYLNALRRERIPVSIYLVNGIKLQGQIESFDQFVILLKNTVNQMVYKHAISTVVPARSV).

The protein belongs to the Hfq family. Homohexamer.

RNA chaperone that binds small regulatory RNA (sRNAs) and mRNAs to facilitate mRNA translational regulation in response to envelope stress, environmental stress and changes in metabolite concentrations. Also binds with high specificity to tRNAs. This is RNA-binding protein Hfq from Histophilus somni (strain 129Pt) (Haemophilus somnus).